Consider the following 302-residue polypeptide: 4-hydroxy-tetrahydrodipicolinate synthase (302 aa).

Pyruvate is bound at residue Thr-50. Catalysis depends on Tyr-138, which acts as the Proton donor/acceptor. Lys-167 acts as the Schiff-base intermediate with substrate in catalysis. Val-209 contributes to the pyruvate binding site.

The protein belongs to the DapA family. As to quaternary structure, homotetramer; dimer of dimers.

The protein localises to the cytoplasm. It carries out the reaction L-aspartate 4-semialdehyde + pyruvate = (2S,4S)-4-hydroxy-2,3,4,5-tetrahydrodipicolinate + H2O + H(+). It participates in amino-acid biosynthesis; L-lysine biosynthesis via DAP pathway; (S)-tetrahydrodipicolinate from L-aspartate: step 3/4. Catalyzes the condensation of (S)-aspartate-beta-semialdehyde [(S)-ASA] and pyruvate to 4-hydroxy-tetrahydrodipicolinate (HTPA). This chain is 4-hydroxy-tetrahydrodipicolinate synthase, found in Salinibacter ruber (strain DSM 13855 / M31).